The following is a 140-amino-acid chain: UPF0102 protein alr1796 (140 aa).

This sequence belongs to the UPF0102 family.

This Nostoc sp. (strain PCC 7120 / SAG 25.82 / UTEX 2576) protein is UPF0102 protein alr1796.